The primary structure comprises 63 residues: Sarcotoxin-1B (63 aa).

A signal peptide spans 1 to 23 (MNFNKVFIFVALILAVFAGQSQA). R62 bears the Arginine amide mark.

The protein belongs to the cecropin family.

The protein resides in the secreted. Sarcotoxins, which are potent bactericidal proteins, are produced in response to injury. They are cytotoxic to both Gram-positive and Gram-negative bacteria. In Sarcophaga peregrina (Flesh fly), this protein is Sarcotoxin-1B.